A 62-amino-acid polypeptide reads, in one-letter code: Large ribosomal subunit protein bL28 (62 aa).

This sequence belongs to the bacterial ribosomal protein bL28 family.

This Aliarcobacter butzleri (strain RM4018) (Arcobacter butzleri) protein is Large ribosomal subunit protein bL28.